We begin with the raw amino-acid sequence, 418 residues long: Glutamyl-tRNA reductase (418 aa).

Substrate-binding positions include 49-52, Ser109, 114-116, and Gln120; these read TCNR and EPQ. Residue Cys50 is the Nucleophile of the active site. 189–194 is a binding site for NADP(+); that stretch reads GAGETI.

Belongs to the glutamyl-tRNA reductase family. As to quaternary structure, homodimer.

It catalyses the reaction (S)-4-amino-5-oxopentanoate + tRNA(Glu) + NADP(+) = L-glutamyl-tRNA(Glu) + NADPH + H(+). It functions in the pathway porphyrin-containing compound metabolism; protoporphyrin-IX biosynthesis; 5-aminolevulinate from L-glutamyl-tRNA(Glu): step 1/2. Functionally, catalyzes the NADPH-dependent reduction of glutamyl-tRNA(Glu) to glutamate 1-semialdehyde (GSA). This is Glutamyl-tRNA reductase from Salmonella heidelberg (strain SL476).